The primary structure comprises 195 residues: dTTP/UTP pyrophosphatase (195 aa).

Asp-73 acts as the Proton acceptor in catalysis.

This sequence belongs to the Maf family. YhdE subfamily. A divalent metal cation is required as a cofactor.

The protein localises to the cytoplasm. The catalysed reaction is dTTP + H2O = dTMP + diphosphate + H(+). It catalyses the reaction UTP + H2O = UMP + diphosphate + H(+). Its function is as follows. Nucleoside triphosphate pyrophosphatase that hydrolyzes dTTP and UTP. May have a dual role in cell division arrest and in preventing the incorporation of modified nucleotides into cellular nucleic acids. The protein is dTTP/UTP pyrophosphatase of Exiguobacterium sibiricum (strain DSM 17290 / CCUG 55495 / CIP 109462 / JCM 13490 / 255-15).